We begin with the raw amino-acid sequence, 685 residues long: Bifunctional diguanylate cyclase/cyclic di-GMP phosphodiesterase MucR (685 aa).

The MHYT domain occupies 6 to 199; that stretch reads YNQVLVAFSL…YTGMAAAQFP (194 aa). Transmembrane regions (helical) follow at residues 9-29, 44-64, 77-97, 117-137, 141-161, 175-195, and 214-234; these read VLVA…LDMA, LIGG…VGML, GLTL…LWLV, GIAA…GIVY, WLGL…WIAF, AGAA…GMAA, and GWLA…ALIV. The Cytoplasmic portion of the chain corresponds to 235–685; the sequence is SVLDSRLEAR…PAEQLLASVA (451 aa). The GGDEF domain maps to 293 to 425; sequence RRFAVLFMDL…GRNGYCFFES (133 aa). The EAL domain maps to 434–685; sequence QLQLLHDLRQ…PAEQLLASVA (252 aa). 3',3'-c-di-GMP-binding residues include Q455, E469, L472, R473, N528, and Q533. E469 is a binding site for Mg(2+). N528 contributes to the Mg(2+) binding site. Residues E560, D590, and D591 each contribute to the Mg(2+) site. D590 provides a ligand contact to 3',3'-c-di-GMP. R614 contacts 3',3'-c-di-GMP. Position 647 (E647) interacts with Mg(2+). Positions 650 and 669 each coordinate 3',3'-c-di-GMP.

As to quaternary structure, homodimer. It depends on Mg(2+) as a cofactor.

The protein localises to the cell inner membrane. It catalyses the reaction 2 GTP = 3',3'-c-di-GMP + 2 diphosphate. The catalysed reaction is 3',3'-c-di-GMP + H2O = 5'-phosphoguanylyl(3'-&gt;5')guanosine + H(+). In terms of biological role, displays both diguanylate cyclase (DGC) and c-di-GMP-specific phosphodiesterase (PDE) activity. Probably modulates DGC and PDE activities, and thus c-di-GMP levels, in a growth mode-dependent manner. May act as a PDE under planktonic growth conditions and as a DGC in biofilms. During biofilm formation, it specifically activates alginate biosynthesis via generation of a localized c-di-GMP pool in the vicinity of the alginate biosynthesis protein Alg44. The protein is Bifunctional diguanylate cyclase/cyclic di-GMP phosphodiesterase MucR of Pseudomonas aeruginosa (strain ATCC 15692 / DSM 22644 / CIP 104116 / JCM 14847 / LMG 12228 / 1C / PRS 101 / PAO1).